A 305-amino-acid polypeptide reads, in one-letter code: Protoheme IX farnesyltransferase (305 aa).

9 helical membrane-spanning segments follow: residues 31 to 51 (VMSLVIFTGFVGIWLAPYSVH), 52 to 72 (PFIAGIAVVCIALGAGSAGAI), 102 to 119 (ALSFGLITGFFAVFFMAL), 123 to 145 (LLASFLLLFTIFYYICIYTIWLK), 151 to 171 (NIVIGGVSGALPPVIGYAAVS), 179 to 199 (IILFLIIFIWTPPHSWALALF), 225 to 245 (ILIYSILLFIVSLMPFFIGMN), 247 to 267 (FIYLITSGILGLVFLYYSGSL), and 284 to 304 (SIFYLFFIFLLLSSTSTISLI).

Belongs to the UbiA prenyltransferase family. Protoheme IX farnesyltransferase subfamily.

The protein resides in the cell inner membrane. It catalyses the reaction heme b + (2E,6E)-farnesyl diphosphate + H2O = Fe(II)-heme o + diphosphate. The protein operates within porphyrin-containing compound metabolism; heme O biosynthesis; heme O from protoheme: step 1/1. Converts heme B (protoheme IX) to heme O by substitution of the vinyl group on carbon 2 of heme B porphyrin ring with a hydroxyethyl farnesyl side group. The polypeptide is Protoheme IX farnesyltransferase (Rickettsia felis (strain ATCC VR-1525 / URRWXCal2) (Rickettsia azadi)).